A 286-amino-acid chain; its full sequence is NAD kinase (286 aa).

The active-site Proton acceptor is the Asp68. Residues Asp68–Gly69, Lys73, Asn142–Asp143, Arg153, Asp172, Thr183–Ser188, and Gln242 each bind NAD(+).

The protein belongs to the NAD kinase family. Requires a divalent metal cation as cofactor.

The protein resides in the cytoplasm. The catalysed reaction is NAD(+) + ATP = ADP + NADP(+) + H(+). Involved in the regulation of the intracellular balance of NAD and NADP, and is a key enzyme in the biosynthesis of NADP. Catalyzes specifically the phosphorylation on 2'-hydroxyl of the adenosine moiety of NAD to yield NADP. This is NAD kinase from Natranaerobius thermophilus (strain ATCC BAA-1301 / DSM 18059 / JW/NM-WN-LF).